We begin with the raw amino-acid sequence, 1473 residues long: Sulfite reductase [NADPH] subunit beta (1473 aa).

A Flavodoxin-like domain is found at 728 to 876 (LTILFASDGG…AYNLWEPELW (149 aa)). [4Fe-4S] cluster is bound by residues Cys-1328, Cys-1334, Cys-1373, and Cys-1377. Cys-1377 contributes to the siroheme binding site.

The protein belongs to the nitrite and sulfite reductase 4Fe-4S domain family. As to quaternary structure, alpha(2)-beta(2). The alpha component is a flavoprotein, the beta component is a hemoprotein. It depends on siroheme as a cofactor. [4Fe-4S] cluster is required as a cofactor.

Its subcellular location is the cytoplasm. It catalyses the reaction hydrogen sulfide + 3 NADP(+) + 3 H2O = sulfite + 3 NADPH + 4 H(+). The protein operates within sulfur metabolism; hydrogen sulfide biosynthesis; hydrogen sulfide from sulfite (NADPH route): step 1/1. In terms of biological role, catalyzes the reduction of sulfite to sulfide, one of several activities required for the biosynthesis of L-cysteine from sulfate. This chain is Sulfite reductase [NADPH] subunit beta (sir1), found in Schizosaccharomyces pombe (strain 972 / ATCC 24843) (Fission yeast).